A 210-amino-acid chain; its full sequence is Proteasome subunit beta 2 (210 aa).

Positions 1–12 (MSNNVEEKILHG) are cleaved as a propeptide — removed in mature form; by autocatalysis. T13 serves as the catalytic Nucleophile.

This sequence belongs to the peptidase T1B family. In terms of assembly, the 20S proteasome core is composed of 14 alpha and 14 beta subunits that assemble into four stacked heptameric rings, resulting in a barrel-shaped structure. The two inner rings, each composed of seven catalytic beta subunits, are sandwiched by two outer rings, each composed of seven alpha subunits. The catalytic chamber with the active sites is on the inside of the barrel. Has a gated structure, the ends of the cylinder being occluded by the N-termini of the alpha-subunits. Is capped at one or both ends by the proteasome regulatory ATPase, PAN.

It localises to the cytoplasm. The enzyme catalyses Cleavage of peptide bonds with very broad specificity.. The formation of the proteasomal ATPase PAN-20S proteasome complex, via the docking of the C-termini of PAN into the intersubunit pockets in the alpha-rings, triggers opening of the gate for substrate entry. Interconversion between the open-gate and close-gate conformations leads to a dynamic regulation of the 20S proteasome proteolysis activity. In terms of biological role, component of the proteasome core, a large protease complex with broad specificity involved in protein degradation. The sequence is that of Proteasome subunit beta 2 from Nitrosopumilus maritimus (strain SCM1).